Reading from the N-terminus, the 653-residue chain is Poly [ADP-ribose] polymerase 2 (653 aa).

Residues Ser2–Ile36 enclose the SAP 1 domain. Residues Asn64–Thr84 form a disordered region. The Nuclear localization signal motif lies at Lys69 to Arg72. In terms of domain architecture, SAP 2 spans Leu91–Thr125. The WGR domain occupies Asn179 to Tyr276. One can recognise a PARP alpha-helical domain in the interval Glu301–Glu419. One can recognise a PARP catalytic domain in the interval Asp427–Arg653.

The protein belongs to the ARTD/PARP family.

It is found in the nucleus. It carries out the reaction NAD(+) + (ADP-D-ribosyl)n-acceptor = nicotinamide + (ADP-D-ribosyl)n+1-acceptor + H(+).. The enzyme catalyses L-aspartyl-[protein] + NAD(+) = 4-O-(ADP-D-ribosyl)-L-aspartyl-[protein] + nicotinamide. The catalysed reaction is L-glutamyl-[protein] + NAD(+) = 5-O-(ADP-D-ribosyl)-L-glutamyl-[protein] + nicotinamide. Its function is as follows. Involved in the base excision repair (BER) pathway, by catalyzing the poly(ADP-ribosyl)ation of a limited number of acceptor proteins involved in chromatin architecture and in DNA metabolism. This modification follows DNA damages and appears as an obligatory step in a detection/signaling pathway leading to the reparation of DNA strand breaks. The protein is Poly [ADP-ribose] polymerase 2 (PARP2) of Zea mays (Maize).